The sequence spans 326 residues: MAMTAAVKDELSRVDVPKPCCRRAEMAALLRFAGGLHIVSGRVVVEAELDTGAVARRLRREIAEVYGYPSEIHVLASGGLRKGSHFIVRVVKDGEFLARQTGLLDVRGRPVRGLPPHVVAANVCCAVSAWRGAFMAHGSLTEPGRSSALEITCPGPESALALVGAARRIGIAAKNREVRGVDRVVVKDGDAIAALLTRIGAHASVLAWEERRVRREVRATANRLANFDDANLRRSARAAVAAAARVTRALEILADDAPHHLTSAGRLRLEHRQASLEELGALADPPLTKDAIAGRIRRLLALADKRARDLGIPDTEAAVTPDMLVV.

Positions 275–308 (SLEELGALADPPLTKDAIAGRIRRLLALADKRAR) form a DNA-binding region, H-T-H motif.

The protein belongs to the WhiA family.

In terms of biological role, involved in cell division and chromosome segregation. The protein is Probable cell division protein WhiA of Salinispora arenicola (strain CNS-205).